Reading from the N-terminus, the 472-residue chain is Kynureninase 2 (472 aa).

Pyridoxal 5'-phosphate contacts are provided by residues Leu-133, Thr-134, 162 to 165 (FPSD), Asp-247, His-250, and Tyr-272. Lys-273 bears the N6-(pyridoxal phosphate)lysine mark. Residues Trp-314 and Asn-342 each contribute to the pyridoxal 5'-phosphate site.

Belongs to the kynureninase family. As to quaternary structure, homodimer. Pyridoxal 5'-phosphate serves as cofactor.

The protein resides in the cytoplasm. It catalyses the reaction L-kynurenine + H2O = anthranilate + L-alanine + H(+). The catalysed reaction is 3-hydroxy-L-kynurenine + H2O = 3-hydroxyanthranilate + L-alanine + H(+). The protein operates within amino-acid degradation; L-kynurenine degradation; L-alanine and anthranilate from L-kynurenine: step 1/1. Its pathway is cofactor biosynthesis; NAD(+) biosynthesis; quinolinate from L-kynurenine: step 2/3. In terms of biological role, catalyzes the cleavage of L-kynurenine (L-Kyn) and L-3-hydroxykynurenine (L-3OHKyn) into anthranilic acid (AA) and 3-hydroxyanthranilic acid (3-OHAA), respectively. The sequence is that of Kynureninase 2 (kyn-2) from Neurospora crassa (strain ATCC 24698 / 74-OR23-1A / CBS 708.71 / DSM 1257 / FGSC 987).